Consider the following 94-residue polypeptide: Protein LURE 1.1 (94 aa).

Residues 1-19 (MKLIFIFLTLLIFVSSCTS) form the signal peptide. Intrachain disulfides connect C58/C75, C61/C82, and C65/C84. Residues 67–87 (RRDRYIRTCSFERKLCRCSYS) are PRK6 binding.

This sequence belongs to the DEFL family. In terms of assembly, binds to PRK6 LRRs. Expressed in the pistil. Detected exclusively in the synergid cells.

It localises to the secreted. Pollen tube attractants guiding pollen tubes to the ovular micropyle. In Arabidopsis thaliana (Mouse-ear cress), this protein is Protein LURE 1.1.